A 535-amino-acid polypeptide reads, in one-letter code: Dual specificity calcium/calmodulin-dependent 3',5'-cyclic nucleotide phosphodiesterase 1B (535 aa).

Positions 1-21 (MELSPRSPPEMLESDCPSPLE) are disordered. Phosphoserine is present on residues serine 7 and serine 14. 2 calmodulin-binding regions span residues 27 to 47 (SKKM…QLEN) and 117 to 140 (EKPK…MFRR). Residues 145-502 (VGPTYSTAVH…QKWKERAASG (358 aa)) form the PDEase domain. Histidine 222 functions as the Proton donor in the catalytic mechanism. Zn(2+) is bound by residues histidine 226, histidine 262, aspartate 263, and aspartate 369. Residue aspartate 263 coordinates Mg(2+). 2 disordered regions span residues 445–474 (PLTD…GDPN) and 495–535 (WKER…GNLD). The span at 454–463 (KSQPSFQWRQ) shows a compositional bias: polar residues. Phosphoserine is present on residues serine 465 and serine 513.

Belongs to the cyclic nucleotide phosphodiesterase family. PDE1 subfamily. In terms of assembly, homodimer. Zn(2+) is required as a cofactor. It depends on Mg(2+) as a cofactor. In terms of tissue distribution, expressed in brain.

Its subcellular location is the cytoplasm. The protein resides in the cytosol. It carries out the reaction a nucleoside 3',5'-cyclic phosphate + H2O = a nucleoside 5'-phosphate + H(+). It catalyses the reaction 3',5'-cyclic GMP + H2O = GMP + H(+). The catalysed reaction is 3',5'-cyclic AMP + H2O = AMP + H(+). With respect to regulation, type I PDE are activated by the binding of calmodulin in the presence of Ca(2+). Its function is as follows. Cyclic nucleotide phosphodiesterase with a dual specificity for the second messengers cAMP and cGMP, which are key regulators of many important physiological processes. Has a preference for cGMP as a substrate. The chain is Dual specificity calcium/calmodulin-dependent 3',5'-cyclic nucleotide phosphodiesterase 1B from Rattus norvegicus (Rat).